A 169-amino-acid chain; its full sequence is Peptide methionine sulfoxide reductase MsrA (169 aa).

The active site involves Cys10.

This sequence belongs to the MsrA Met sulfoxide reductase family.

It catalyses the reaction L-methionyl-[protein] + [thioredoxin]-disulfide + H2O = L-methionyl-(S)-S-oxide-[protein] + [thioredoxin]-dithiol. It carries out the reaction [thioredoxin]-disulfide + L-methionine + H2O = L-methionine (S)-S-oxide + [thioredoxin]-dithiol. Functionally, has an important function as a repair enzyme for proteins that have been inactivated by oxidation. Catalyzes the reversible oxidation-reduction of methionine sulfoxide in proteins to methionine. This chain is Peptide methionine sulfoxide reductase MsrA, found in Streptococcus pyogenes serotype M1.